Reading from the N-terminus, the 347-residue chain is Tyrosine recombinase XerC 2 (347 aa).

One can recognise a Core-binding (CB) domain in the interval 17–108 (LVLTRYMEAH…PLKTWFKWLA (92 aa)). One can recognise a Tyr recombinase domain in the interval 125 to 313 (KLPKHLPRAI…SIEHLRAIHD (189 aa)). Active-site residues include arginine 170, lysine 195, histidine 265, arginine 268, and histidine 291. The O-(3'-phospho-DNA)-tyrosine intermediate role is filled by tyrosine 300.

The protein belongs to the 'phage' integrase family.

The protein localises to the cytoplasm. Site-specific tyrosine recombinase, which acts by catalyzing the cutting and rejoining of the recombining DNA molecules. This Ralstonia nicotianae (strain ATCC BAA-1114 / GMI1000) (Ralstonia solanacearum) protein is Tyrosine recombinase XerC 2.